The primary structure comprises 407 residues: S-adenosylmethionine synthase (407 aa).

Residue histidine 15 coordinates ATP. Aspartate 17 is a binding site for Mg(2+). Glutamate 43 lines the K(+) pocket. Residues glutamate 56 and glutamine 99 each contribute to the L-methionine site. The interval 99-109 is flexible loop; it reads QSPDIARGVDT. Residues 112–131 form a disordered region; it reads ERRGGGTAPGGPGDELDRQG. ATP-binding positions include 179-181, 252-253, aspartate 261, 267-268, alanine 284, and lysine 288; these read DGK, RF, and RK. Residue aspartate 261 participates in L-methionine binding. An L-methionine-binding site is contributed by lysine 292.

This sequence belongs to the AdoMet synthase family. In terms of assembly, homotetramer; dimer of dimers. The cofactor is Mg(2+). It depends on K(+) as a cofactor.

Its subcellular location is the cytoplasm. The enzyme catalyses L-methionine + ATP + H2O = S-adenosyl-L-methionine + phosphate + diphosphate. It participates in amino-acid biosynthesis; S-adenosyl-L-methionine biosynthesis; S-adenosyl-L-methionine from L-methionine: step 1/1. Functionally, catalyzes the formation of S-adenosylmethionine (AdoMet) from methionine and ATP. The overall synthetic reaction is composed of two sequential steps, AdoMet formation and the subsequent tripolyphosphate hydrolysis which occurs prior to release of AdoMet from the enzyme. The protein is S-adenosylmethionine synthase of Streptomyces fradiae (Streptomyces roseoflavus).